The chain runs to 141 residues: Flagellar assembly factor FliW (141 aa).

This sequence belongs to the FliW family. As to quaternary structure, interacts with translational regulator CsrA and flagellin(s).

It is found in the cytoplasm. Acts as an anti-CsrA protein, binds CsrA and prevents it from repressing translation of its target genes, one of which is flagellin. Binds to flagellin and participates in the assembly of the flagellum. In Clostridium botulinum (strain Alaska E43 / Type E3), this protein is Flagellar assembly factor FliW.